We begin with the raw amino-acid sequence, 449 residues long: uncharacterized protein (449 aa).

The 59-residue stretch at 3–61 (VWQQGATIELRIDSLSHTGEGVGRWQDRVVFVADTVPGDRLRVRLTHVKRQYAHGKVLE) folds into the TRAM domain. [4Fe-4S] cluster contacts are provided by Cys-74, Cys-80, Cys-83, and Cys-161. S-adenosyl-L-methionine is bound by residues Gln-283, Tyr-312, Glu-333, and Asp-378. The active-site Nucleophile is Cys-405.

This sequence belongs to the class I-like SAM-binding methyltransferase superfamily. RNA M5U methyltransferase family.

This is an uncharacterized protein from Thermosynechococcus vestitus (strain NIES-2133 / IAM M-273 / BP-1).